The sequence spans 247 residues: MNVLLCSINTFKRLYDISAVEVGQHFYWQMGDFQVHAQVLITSWVVIAILLGSTILVVRNPQTIPNFGQNFFEYVLEFIRDVSKTQIGEEYGPWVPFIGTLFLFIFVSNWSGALLPWKIIQLPHGELAAPTNDINTTVALALLTSVAYFYAGISKKGLAYFGKYIQPTPILLPINILEDFTKPLSLSFRLFGNILADELVVVVLVSLVPLVVPIPVMFLGLFTSGIQALIFATLAAAYIGESMEGHH.

A run of 5 helical transmembrane segments spans residues 38–58, 95–115, 134–154, 199–219, and 220–240; these read QVLITSWVVIAILLGSTILVV, VPFIGTLFLFIFVSNWSGALL, INTTVALALLTSVAYFYAGIS, LVVVVLVSLVPLVVPIPVMFL, and GLFTSGIQALIFATLAAAYIG.

The protein belongs to the ATPase A chain family. F-type ATPases have 2 components, CF(1) - the catalytic core - and CF(0) - the membrane proton channel. CF(1) has five subunits: alpha(3), beta(3), gamma(1), delta(1), epsilon(1). CF(0) has four main subunits: a, b, b' and c.

The protein resides in the plastid. It localises to the chloroplast thylakoid membrane. Key component of the proton channel; it plays a direct role in the translocation of protons across the membrane. The protein is ATP synthase subunit a, chloroplastic of Lotus japonicus (Lotus corniculatus var. japonicus).